The primary structure comprises 360 residues: Glutamate 5-kinase (360 aa).

K7 contacts ATP. 3 residues coordinate substrate: S47, D134, and N146. ATP contacts are provided by residues T166 to D167 and T210 to K216. Residues V275–V356 enclose the PUA domain.

The protein belongs to the glutamate 5-kinase family.

It localises to the cytoplasm. The catalysed reaction is L-glutamate + ATP = L-glutamyl 5-phosphate + ADP. Its pathway is amino-acid biosynthesis; L-proline biosynthesis; L-glutamate 5-semialdehyde from L-glutamate: step 1/2. Functionally, catalyzes the transfer of a phosphate group to glutamate to form L-glutamate 5-phosphate. This chain is Glutamate 5-kinase, found in Prochlorococcus marinus (strain AS9601).